Here is a 91-residue protein sequence, read N- to C-terminus: Acylphosphatase (91 aa).

In terms of domain architecture, Acylphosphatase-like spans 4-91 (RAIVTIKGLV…GEFDDFDVRY (88 aa)). Residues Arg19 and Asn37 contribute to the active site.

This sequence belongs to the acylphosphatase family.

The enzyme catalyses an acyl phosphate + H2O = a carboxylate + phosphate + H(+). The chain is Acylphosphatase (acyP) from Geobacter sulfurreducens (strain ATCC 51573 / DSM 12127 / PCA).